We begin with the raw amino-acid sequence, 432 residues long: Trigger factor (432 aa).

The region spanning 161 to 246 is the PPIase FKBP-type domain; that stretch reads EDRVTIDFTG…LKKVEERELP (86 aa).

This sequence belongs to the FKBP-type PPIase family. Tig subfamily.

The protein localises to the cytoplasm. It carries out the reaction [protein]-peptidylproline (omega=180) = [protein]-peptidylproline (omega=0). Its function is as follows. Involved in protein export. Acts as a chaperone by maintaining the newly synthesized protein in an open conformation. Functions as a peptidyl-prolyl cis-trans isomerase. This Cronobacter sakazakii (strain ATCC BAA-894) (Enterobacter sakazakii) protein is Trigger factor.